The following is a 309-amino-acid chain: Protein RTM1 (309 aa).

Helical transmembrane passes span 22 to 42 (AIALTVLFIVTTLIYSLQVVW), 83 to 103 (TFSAFIPLFFGCIMEIVGYIA), 119 to 139 (IQAVLLLIAPALYAATIYMLF), 162 to 182 (FFVFGDVVSFCLQAAGGGLMA), 193 to 213 (LITAGLVIQIVFFGVFIINEF), 233 to 253 (WWFLNLTLMLSSILIMVRSIV), and 278 to 298 (AVPMLLAAIVFIVGSFFGNIF).

This sequence belongs to the lipid-translocating exporter (LTE) (TC 9.A.26.1) family.

The protein resides in the membrane. Its function is as follows. Confers resistance to molasses (to a particular toxic element present in some molasses). This is Protein RTM1 (RTM1) from Saccharomyces cerevisiae (Baker's yeast).